A 310-amino-acid polypeptide reads, in one-letter code: Alpha/beta hydrolase domain-containing protein 17A (310 aa).

Residues serine 190, aspartate 255, and histidine 284 each act as charge relay system in the active site. A Phosphoserine modification is found at serine 307.

The protein belongs to the AB hydrolase superfamily. ABHD17 family. Post-translationally, palmitoylated on cysteine residues located in a cysteine cluster at the N-terminus which promotes membrane localization. Palmitoylation is required for post-synaptic localization and for depalmitoylating activity towards DLG4/PSD95.

It localises to the cell membrane. It is found in the endosome membrane. The protein localises to the cell projection. The protein resides in the dendritic spine. Its subcellular location is the postsynaptic density membrane. It catalyses the reaction S-hexadecanoyl-L-cysteinyl-[protein] + H2O = L-cysteinyl-[protein] + hexadecanoate + H(+). In terms of biological role, hydrolyzes fatty acids from S-acylated cysteine residues in proteins. Has depalmitoylating activity towards NRAS. Has depalmitoylating activity towards DLG4/PSD95. May have depalmitoylating activity towards MAP6. This is Alpha/beta hydrolase domain-containing protein 17A from Bos taurus (Bovine).